The following is a 188-amino-acid chain: uncharacterized protein (188 aa).

Residues 121–139 form a helical membrane-spanning segment; the sequence is IWLYGGASLITTFINLGLV.

This sequence to B.subtilis YwjB.

The protein localises to the membrane. This is an uncharacterized protein from Bacillus subtilis (strain 168).